A 255-amino-acid chain; its full sequence is Sec-independent protein translocase protein TatC (255 aa).

A run of 7 helical transmembrane segments spans residues 28–48, 56–76, 80–100, 121–141, 165–185, 195–212, and 216–236; these read VAAV…IYAL, YLPE…LAPF, LMIS…GFIA, LFYA…FGFF, LFFA…LIWV, NSRP…MVLT, and VFSQ…GVFF.

Belongs to the TatC family. As to quaternary structure, the Tat system comprises two distinct complexes: a TatABC complex, containing multiple copies of TatA, TatB and TatC subunits, and a separate TatA complex, containing only TatA subunits. Substrates initially bind to the TatABC complex, which probably triggers association of the separate TatA complex to form the active translocon.

It is found in the cell membrane. Its function is as follows. Part of the twin-arginine translocation (Tat) system that transports large folded proteins containing a characteristic twin-arginine motif in their signal peptide across membranes. Together with TatB, TatC is part of a receptor directly interacting with Tat signal peptides. In Azotobacter chroococcum mcd 1, this protein is Sec-independent protein translocase protein TatC.